The following is a 213-amino-acid chain: N-(5'-phosphoribosyl)anthranilate isomerase (213 aa).

Belongs to the TrpF family.

It catalyses the reaction N-(5-phospho-beta-D-ribosyl)anthranilate = 1-(2-carboxyphenylamino)-1-deoxy-D-ribulose 5-phosphate. Its pathway is amino-acid biosynthesis; L-tryptophan biosynthesis; L-tryptophan from chorismate: step 3/5. This Roseiflexus sp. (strain RS-1) protein is N-(5'-phosphoribosyl)anthranilate isomerase.